The following is a 562-amino-acid chain: Efflux pump apf11 (562 aa).

2 stretches are compositionally biased toward low complexity: residues 1 to 10 and 18 to 30; these read MGDISAATKA and TPET…SSDT. Positions 1–36 are disordered; the sequence is MGDISAATKAPAPPTPATPETNTTSSSSDTDVQHEP. Asparagine 22 carries N-linked (GlcNAc...) asparagine glycosylation. Helical transmembrane passes span 46–66, 83–103, 110–130, 141–161, 169–189, 200–220, 249–269, and 278–298; these read LVIF…TIVA, AWYG…FGKI, KLVF…CALA, AIAG…TALT, VYTA…PIIG, WCFW…VFCL, GGLA…WGGT, and IIVL…HQHW. An N-linked (GlcNAc...) asparagine glycan is attached at asparagine 312. Transmembrane regions (helical) follow at residues 317-337, 356-376, 382-404, 414-434, 447-467, and 516-536; these read MFLL…YYLP, LAMV…AGAV, FVFF…HPSI, ILFG…VQVA, VMLV…TLFL, and FLIG…IRWI.

Belongs to the major facilitator superfamily. TCR/Tet family.

The protein resides in the membrane. It functions in the pathway secondary metabolite biosynthesis. In terms of biological role, efflux pump; part of the gene cluster that mediates the biosynthesis of the cyclic tetrapeptide apicidin F (APF). This chain is Efflux pump apf11 (apf11), found in Gibberella fujikuroi (strain CBS 195.34 / IMI 58289 / NRRL A-6831) (Bakanae and foot rot disease fungus).